The sequence spans 475 residues: Ubiquilin-like protein (475 aa).

One can recognise a Ubiquitin-like domain in the interval 31–105 (TRVIVKTAGN…IYLVIKSKQG (75 aa)). 2 disordered regions span residues 113-138 (FRDL…VHQP) and 305-325 (QVQS…QLTQ). The span at 129–138 (KGNSSRVHQP) shows a compositional bias: polar residues.

The protein is Ubiquilin-like protein (UBQLNL) of Homo sapiens (Human).